The primary structure comprises 107 residues: Nucleoid-associated protein NE0434 (107 aa).

The protein belongs to the YbaB/EbfC family. As to quaternary structure, homodimer.

The protein resides in the cytoplasm. Its subcellular location is the nucleoid. Functionally, binds to DNA and alters its conformation. May be involved in regulation of gene expression, nucleoid organization and DNA protection. This is Nucleoid-associated protein NE0434 from Nitrosomonas europaea (strain ATCC 19718 / CIP 103999 / KCTC 2705 / NBRC 14298).